Here is an 887-residue protein sequence, read N- to C-terminus: Golgin IMH1 (887 aa).

4 disordered regions span residues 16–50 (LAKG…EELP), 142–214 (QESL…MKSQ), 240–301 (GASQ…SAGD), and 783–822 (LKMS…SISS). 2 stretches are compositionally biased toward basic and acidic residues: residues 37–50 (GRRE…EELP) and 145–210 (LEQR…HAAE). The stretch at 118–241 (AMLTEEIKRI…YKSTIQELGA (124 aa)) forms a coiled coil. Over residues 240–254 (GASQATGEAQPSSEA) the composition is skewed to polar residues. Basic residues predominate over residues 258 to 273 (RGKKGKGKRGKGKKRV). The stretch at 299-788 (AGDEIIEAIE…LSTQLKMSKD (490 aa)) forms a coiled coil. Positions 788–807 (DMSSQSRHSSRSGSLVSPSS) are enriched in low complexity. Over residues 808–822 (DNETGNSPRKISISS) the composition is skewed to polar residues. The region spanning 837–885 (EMESNEKLAYIRNVLLGFLEHREQRSQLLPVVSTLLQLSSHDEKRLLTS) is the GRIP domain.

The protein localises to the cytoplasm. It is found in the golgi apparatus membrane. Its function is as follows. Involved in vesicular transport between an endosomal compartment and the Golgi apparatus. This chain is Golgin IMH1 (IMH1), found in Eremothecium gossypii (strain ATCC 10895 / CBS 109.51 / FGSC 9923 / NRRL Y-1056) (Yeast).